A 654-amino-acid polypeptide reads, in one-letter code: RING finger protein 112 (654 aa).

Residues 80-121 form an RING-type zinc finger; it reads CSICLERLREPISLDCGHDFCIRCFSTHRIPGCELPCCPECR. The interaction with ZBTB16 stretch occupies residues 154–654; sequence AVRAERLLLV…GDREPLLQEE (501 aa). The GB1/RHD3-type G domain occupies 189–420; that stretch reads DTPVCLLAVL…YILDVLSTAP (232 aa). Residue 340–341 participates in GTP binding; it reads RD. Transmembrane regions (helical) follow at residues 570 to 590 and 603 to 623; these read LAAV…GVVG and GMVA…GGGV.

The protein belongs to the TRAFAC class dynamin-like GTPase superfamily. GB1/RHD3 GTPase family. GB1 subfamily. As to quaternary structure, self-associates. Interacts with SP1 in an oxidative stress-regulated manner. Interacts with SIGMAR1 in an oxidative stress-regulated manner. Interacts with ZBTB16 (via C2H2-type zinc finger domains 1 and 2). In terms of processing, auto-ubiquitinated. In terms of tissue distribution, expressed in most of the brain areas, including cortex, striatum, hippocampus, thalamus, and cerebellum (at protein level). Expressed in lateral amygdaloid nucleus, and ventromedial hypothalamus. Also expressed strongly in the marginal zone of brain vesicles, optic stalk, and cartilage primordium.

Its subcellular location is the membrane. It is found in the cytoplasm. The protein resides in the nucleus. It localises to the nuclear body. The protein localises to the nucleoplasm. Its subcellular location is the endosome. It is found in the cytoplasmic vesicle. The protein resides in the secretory vesicle. It localises to the synaptic vesicle. The protein localises to the postsynaptic density. Its subcellular location is the perikaryon. It is found in the cell projection. The protein resides in the neuron projection. The catalysed reaction is S-ubiquitinyl-[E2 ubiquitin-conjugating enzyme]-L-cysteine + [acceptor protein]-L-lysine = [E2 ubiquitin-conjugating enzyme]-L-cysteine + N(6)-ubiquitinyl-[acceptor protein]-L-lysine.. Its pathway is protein modification; protein ubiquitination. E3 ubiquitin-protein ligase that plays an important role in neuronal differentiation, including neurogenesis and gliogenesis, during brain development. During embryonic development initiates neuronal differentiation by inducing cell cycle arrest at the G0/G1 phase through up-regulation of cell-cycle regulatory proteins. Plays a role not only in the fetal period during the development of the nervous system, but also in the adult brain, where it is involved in the maintenance of neural functions and protection of the nervous tissue cells from oxidative stress-induced damage. Exhibits GTPase and E3 ubiquitin-protein ligase activities. Regulates dendritic spine density and synaptic neurotransmission; its ability to hydrolyze GTP is involved in the maintenance of dendritic spine density. The sequence is that of RING finger protein 112 (Rnf112) from Mus musculus (Mouse).